The sequence spans 371 residues: Chorismate synthase (371 aa).

NADP(+) contacts are provided by R48 and R54. Residues 130-132, 242-243, G287, 302-306, and R328 contribute to the FMN site; these read RSS, NA, and KPTSS.

Belongs to the chorismate synthase family. Homotetramer. FMNH2 serves as cofactor.

The catalysed reaction is 5-O-(1-carboxyvinyl)-3-phosphoshikimate = chorismate + phosphate. It functions in the pathway metabolic intermediate biosynthesis; chorismate biosynthesis; chorismate from D-erythrose 4-phosphate and phosphoenolpyruvate: step 7/7. Its function is as follows. Catalyzes the anti-1,4-elimination of the C-3 phosphate and the C-6 proR hydrogen from 5-enolpyruvylshikimate-3-phosphate (EPSP) to yield chorismate, which is the branch point compound that serves as the starting substrate for the three terminal pathways of aromatic amino acid biosynthesis. This reaction introduces a second double bond into the aromatic ring system. The polypeptide is Chorismate synthase (Azorhizobium caulinodans (strain ATCC 43989 / DSM 5975 / JCM 20966 / LMG 6465 / NBRC 14845 / NCIMB 13405 / ORS 571)).